A 750-amino-acid polypeptide reads, in one-letter code: Photosystem I P700 chlorophyll a apoprotein A1 (750 aa).

A run of 8 helical transmembrane segments spans residues 70 to 93 (VFSA…FHGA), 156 to 179 (LYCT…FHYH), 195 to 219 (LNHH…HVSL), 291 to 309 (IAHH…GHMY), 346 to 369 (WHAQ…HHMY), 385 to 411 (LSLF…IFMV), 433 to 455 (AIIS…LYIH), and 531 to 549 (FLVH…LILL). Cys-573 and Cys-582 together coordinate [4Fe-4S] cluster. 2 helical membrane-spanning segments follow: residues 589–610 (HVFL…HFSW) and 664–686 (LSAY…MFLF). His-675 lines the chlorophyll a' pocket. Chlorophyll a-binding residues include Met-683 and Tyr-691. Phylloquinone is bound at residue Trp-692. The chain crosses the membrane as a helical span at residues 724–744 (AVGVTHYLLGGIATTWAFFLA).

This sequence belongs to the PsaA/PsaB family. As to quaternary structure, the PsaA/B heterodimer binds the P700 chlorophyll special pair and subsequent electron acceptors. PSI consists of a core antenna complex that captures photons, and an electron transfer chain that converts photonic excitation into a charge separation. The eukaryotic PSI reaction center is composed of at least 11 subunits. It depends on P700 is a chlorophyll a/chlorophyll a' dimer, A0 is one or more chlorophyll a, A1 is one or both phylloquinones and FX is a shared 4Fe-4S iron-sulfur center. as a cofactor.

The protein localises to the plastid. The protein resides in the chloroplast thylakoid membrane. It catalyses the reaction reduced [plastocyanin] + hnu + oxidized [2Fe-2S]-[ferredoxin] = oxidized [plastocyanin] + reduced [2Fe-2S]-[ferredoxin]. In terms of biological role, psaA and PsaB bind P700, the primary electron donor of photosystem I (PSI), as well as the electron acceptors A0, A1 and FX. PSI is a plastocyanin-ferredoxin oxidoreductase, converting photonic excitation into a charge separation, which transfers an electron from the donor P700 chlorophyll pair to the spectroscopically characterized acceptors A0, A1, FX, FA and FB in turn. Oxidized P700 is reduced on the lumenal side of the thylakoid membrane by plastocyanin. In Lepidium virginicum (Virginia pepperweed), this protein is Photosystem I P700 chlorophyll a apoprotein A1.